Here is a 294-residue protein sequence, read N- to C-terminus: 4-hydroxy-tetrahydrodipicolinate synthase (294 aa).

Residue Thr-44 participates in pyruvate binding. The active-site Proton donor/acceptor is Tyr-132. Catalysis depends on Lys-161, which acts as the Schiff-base intermediate with substrate. Ile-206 provides a ligand contact to pyruvate.

This sequence belongs to the DapA family. In terms of assembly, homotetramer; dimer of dimers.

The protein resides in the cytoplasm. It catalyses the reaction L-aspartate 4-semialdehyde + pyruvate = (2S,4S)-4-hydroxy-2,3,4,5-tetrahydrodipicolinate + H2O + H(+). Its pathway is amino-acid biosynthesis; L-lysine biosynthesis via DAP pathway; (S)-tetrahydrodipicolinate from L-aspartate: step 3/4. In terms of biological role, catalyzes the condensation of (S)-aspartate-beta-semialdehyde [(S)-ASA] and pyruvate to 4-hydroxy-tetrahydrodipicolinate (HTPA). The sequence is that of 4-hydroxy-tetrahydrodipicolinate synthase from Thermotoga sp. (strain RQ2).